We begin with the raw amino-acid sequence, 186 residues long: Large ribosomal subunit protein uL5c (186 aa).

This sequence belongs to the universal ribosomal protein uL5 family. Part of the 50S ribosomal subunit; contacts the 5S rRNA.

The protein localises to the plastid. Its subcellular location is the chloroplast. Binds 5S rRNA, forms part of the central protuberance of the 50S subunit. This Chaetosphaeridium globosum (Charophycean green alga) protein is Large ribosomal subunit protein uL5c (rpl5).